We begin with the raw amino-acid sequence, 316 residues long: tRNA dimethylallyltransferase (316 aa).

17 to 24 (GPTASGKT) contacts ATP. 19–24 (TASGKT) serves as a coordination point for substrate. 3 interaction with substrate tRNA regions span residues 42–45 (DSAL), 166–170 (QRLSR), and 247–252 (RCVGYR).

Belongs to the IPP transferase family. As to quaternary structure, monomer. Mg(2+) serves as cofactor.

It carries out the reaction adenosine(37) in tRNA + dimethylallyl diphosphate = N(6)-dimethylallyladenosine(37) in tRNA + diphosphate. Functionally, catalyzes the transfer of a dimethylallyl group onto the adenine at position 37 in tRNAs that read codons beginning with uridine, leading to the formation of N6-(dimethylallyl)adenosine (i(6)A). The polypeptide is tRNA dimethylallyltransferase (Salmonella typhi).